A 184-amino-acid polypeptide reads, in one-letter code: MKLTMFVVGLLGLLAAPGFAYTVNINGNDGNVDGSGQQSVSINGVHNVANIDNNNGWDSWNSLWDYENSFAATRLFSKKSCIVHRMNKDAMPSLQDLDTMVKEQKGKGPGGAPPKDLMYSVNPTRVEDLNTFGPKIAGMCRGIPTYVAEEIPGPNQPLYSKKCYTADILWILRMSFCGTSVETY.

The first 20 residues, 1 to 20, serve as a signal peptide directing secretion; that stretch reads MKLTMFVVGLLGLLAAPGFA. Residues 54–148 enclose the BRICHOS domain; it reads NNGWDSWNSL…MCRGIPTYVA (95 aa). Cysteines 81 and 140 form a disulfide.

It belongs to the gastrokine family. In terms of tissue distribution, expressed in the stomach. Highly expressed specifically in surface cells of the antrum mucosa from where it is secreted.

The protein resides in the secreted. It is found in the cytoplasmic granule. It localises to the golgi apparatus. In terms of biological role, has mitogenic activity and may be involved in maintaining the integrity of the gastric mucosal epithelium. The chain is Gastrokine-1 (Gkn1) from Mus musculus (Mouse).